Reading from the N-terminus, the 219-residue chain is Response regulator ArlR (219 aa).

The 114-residue stretch at 3–116 folds into the Response regulatory domain; the sequence is NILIVEDEQN…ELLARIRAVL (114 aa). Aspartate 52 carries the 4-aspartylphosphate modification. A DNA-binding region (ompR/PhoB-type) is located at residues 122–219; it reads KDVLDINGII…TVRGVGYVIR (98 aa).

In terms of processing, phosphorylated by ArlS.

It localises to the cytoplasm. In terms of biological role, member of the two-component regulatory system ArlS/ArlR. The protein is Response regulator ArlR (arlR) of Staphylococcus epidermidis (strain ATCC 12228 / FDA PCI 1200).